The chain runs to 231 residues: Transmembrane protein 225 (231 aa).

Residues 1–13 (MVHILVRKVEATN) are Cytoplasmic-facing. Residues 14–34 (MFFSSWTLVFLAVGIIIEEWA) traverse the membrane as a helical segment. At 35–67 (ELKLGPQKPTITHSPWICCTPLWPSDGLEVIRN) the chain is on the extracellular side. The helical transmembrane segment at 68–88 (ILIVVLSLSFMHNLLLGFEFT) threads the bilayer. Residues 89 to 97 (YMIPQTKYT) lie on the Cytoplasmic side of the membrane. Residues 98-118 (LIMTACLAFLTGILLLGALLL) form a helical membrane-spanning segment. The Extracellular portion of the chain corresponds to 119–135 (YHHMLRQGESVYYSSYK). The helical transmembrane segment at 136–156 (ISWIIFTAYLNVLFLFISGFL) threads the bilayer. The Cytoplasmic segment spans residues 157-231 (SLLQYKQPID…IQARRVTWAL (75 aa)). Positions 225–229 (RRVTW) match the RVxF motif.

Interacts (via RVxF motif) with PPP1CC.

Its subcellular location is the cytoplasmic vesicle. The protein localises to the secretory vesicle. It is found in the acrosome membrane. Its function is as follows. Probably inhibits protein phosphatase 1 (PP1) in sperm via binding to catalytic subunit PPP1CC. The protein is Transmembrane protein 225 (TMEM225) of Bos taurus (Bovine).